A 427-amino-acid polypeptide reads, in one-letter code: METAIEWITAHEILDSRGRPTLEALVGLANGATGLAQVPSGASTGTFEAHELRDGDPKRYGGKGVLRAVENILGPIQSELQGEDALNQARIDQLLIDLDGTPNKSRLGANAILAVSLATAKAAAEAVGLPLYKYLGGPFANLLPVPLMNVLNGGAHADNNVDIQEFMLVPIGAASFREALRYGAEVFAVLKQVLQQKGLSTGVGDEGGFAPDLDSNAAALDLLMTAIEQAGYKPGADIALALDVAANELLQDGQYHFEGKAHSAADMVAYYQQLLANYPILSIEDGLAEEDWAGWQAMTAQLGSRVQLVGDDLFVTNLTRLQKGIDSAAANAILIKPNQIGTLTETVSAIQLAVQAGFRTIISHRSGETEDTTIADLAVATRAGQIKTGSLCRSERIAKYNQLLRIEDELGEAAVYAGRVGLGPRAR.

(2R)-2-phosphoglycerate is bound at residue Q164. E206 serves as the catalytic Proton donor. Mg(2+)-binding residues include D243, E284, and D311. (2R)-2-phosphoglycerate-binding residues include K336, R365, S366, and K387. K336 functions as the Proton acceptor in the catalytic mechanism.

The protein belongs to the enolase family. Requires Mg(2+) as cofactor.

Its subcellular location is the cytoplasm. The protein localises to the secreted. It is found in the cell surface. It catalyses the reaction (2R)-2-phosphoglycerate = phosphoenolpyruvate + H2O. It functions in the pathway carbohydrate degradation; glycolysis; pyruvate from D-glyceraldehyde 3-phosphate: step 4/5. In terms of biological role, catalyzes the reversible conversion of 2-phosphoglycerate (2-PG) into phosphoenolpyruvate (PEP). It is essential for the degradation of carbohydrates via glycolysis. In Synechococcus sp. (strain JA-2-3B'a(2-13)) (Cyanobacteria bacterium Yellowstone B-Prime), this protein is Enolase.